The following is a 323-amino-acid chain: L-lactate dehydrogenase 1 (323 aa).

Residues Val-18, Asp-39, Tyr-69, and 83–84 each bind NAD(+); that span reads GA. Substrate-binding residues include Gln-86 and Arg-92. Residues Ser-105, 122 to 124, and Ser-147 each bind NAD(+); that span reads VAN. A substrate-binding site is contributed by 124-127; it reads NPVD. A substrate-binding site is contributed by 152–155; the sequence is DTGR. His-179 functions as the Proton acceptor in the catalytic mechanism. Position 223 is a phosphotyrosine (Tyr-223). Thr-232 contacts substrate.

The protein belongs to the LDH/MDH superfamily. LDH family. Homotetramer.

It localises to the cytoplasm. The catalysed reaction is (S)-lactate + NAD(+) = pyruvate + NADH + H(+). It functions in the pathway fermentation; pyruvate fermentation to lactate; (S)-lactate from pyruvate: step 1/1. In terms of biological role, catalyzes the conversion of lactate to pyruvate. The polypeptide is L-lactate dehydrogenase 1 (Lactobacillus acidophilus (strain ATCC 700396 / NCK56 / N2 / NCFM)).